The sequence spans 105 residues: UPF0473 protein SAK_2028 (105 aa).

It belongs to the UPF0473 family.

The sequence is that of UPF0473 protein SAK_2028 from Streptococcus agalactiae serotype Ia (strain ATCC 27591 / A909 / CDC SS700).